A 147-amino-acid chain; its full sequence is Effector TSP1 (147 aa).

Residues 1–19 (MQITKTLVATLFAASTAFA) form the signal peptide. 2 disulfide bridges follow: Cys-44-Cys-51 and Cys-67-Cys-87.

In terms of assembly, homodimer.

The protein resides in the secreted. Stimulates salicylic acid signaling in host plant roots. This chain is Effector TSP1, found in Hypocrea virens (strain Gv29-8 / FGSC 10586) (Gliocladium virens).